The sequence spans 465 residues: Ribulose bisphosphate carboxylase large chain (465 aa).

An N6,N6,N6-trimethyllysine modification is found at Lys4. Residues Asn113 and Thr163 each contribute to the substrate site. The Proton acceptor role is filled by Lys165. Position 167 (Lys167) interacts with substrate. Mg(2+) is bound by residues Lys191, Asp193, and Glu194. Lys191 carries the post-translational modification N6-carboxylysine. His284 serves as the catalytic Proton acceptor. Substrate-binding residues include Arg285, His317, and Ser369.

This sequence belongs to the RuBisCO large chain family. Type I subfamily. As to quaternary structure, heterohexadecamer of 8 large chains and 8 small chains; disulfide-linked. The disulfide link is formed within the large subunit homodimers. Mg(2+) serves as cofactor. The disulfide bond which can form in the large chain dimeric partners within the hexadecamer appears to be associated with oxidative stress and protein turnover.

The protein localises to the plastid. It is found in the chloroplast. It catalyses the reaction 2 (2R)-3-phosphoglycerate + 2 H(+) = D-ribulose 1,5-bisphosphate + CO2 + H2O. It carries out the reaction D-ribulose 1,5-bisphosphate + O2 = 2-phosphoglycolate + (2R)-3-phosphoglycerate + 2 H(+). Functionally, ruBisCO catalyzes two reactions: the carboxylation of D-ribulose 1,5-bisphosphate, the primary event in carbon dioxide fixation, as well as the oxidative fragmentation of the pentose substrate in the photorespiration process. Both reactions occur simultaneously and in competition at the same active site. This Hamamelis mollis (Chinese witch hazel) protein is Ribulose bisphosphate carboxylase large chain.